A 330-amino-acid chain; its full sequence is Adenylate isopentenyltransferase 5, chloroplastic (330 aa).

The N-terminal 39 residues, 1-39, are a transit peptide targeting the chloroplast; sequence MKPCMTALRQVIQPLSLNFQGNMVDVPFFRRKDKVVFVM. 40–47 serves as a coordination point for ATP; sequence GATGTGKS.

The protein belongs to the IPP transferase family. As to expression, expressed in root primordia, columella root caps, upper part of young inflorescences, and fruit abscission zones.

The protein resides in the plastid. It is found in the chloroplast. The enzyme catalyses dimethylallyl diphosphate + ADP = N(6)-(dimethylallyl)adenosine 5'-diphosphate + diphosphate. It catalyses the reaction dimethylallyl diphosphate + ATP = N(6)-(dimethylallyl)adenosine 5'-triphosphate + diphosphate. Its function is as follows. Involved in cytokinin biosynthesis. Catalyzes the transfer of an isopentenyl group from dimethylallyl diphosphate (DMAPP) to ATP and ADP. The sequence is that of Adenylate isopentenyltransferase 5, chloroplastic (IPT5) from Arabidopsis thaliana (Mouse-ear cress).